The following is a 283-amino-acid chain: 4-diphosphocytidyl-2-C-methyl-D-erythritol kinase (283 aa).

The active site involves Lys-10. ATP is bound at residue Pro-99–Ser-109. The active site involves Asp-141.

This sequence belongs to the GHMP kinase family. IspE subfamily. In terms of assembly, homodimer.

It carries out the reaction 4-CDP-2-C-methyl-D-erythritol + ATP = 4-CDP-2-C-methyl-D-erythritol 2-phosphate + ADP + H(+). Its pathway is isoprenoid biosynthesis; isopentenyl diphosphate biosynthesis via DXP pathway; isopentenyl diphosphate from 1-deoxy-D-xylulose 5-phosphate: step 3/6. Its function is as follows. Catalyzes the phosphorylation of the position 2 hydroxy group of 4-diphosphocytidyl-2C-methyl-D-erythritol. The chain is 4-diphosphocytidyl-2-C-methyl-D-erythritol kinase from Citrobacter koseri (strain ATCC BAA-895 / CDC 4225-83 / SGSC4696).